The sequence spans 477 residues: Aspartyl/glutamyl-tRNA(Asn/Gln) amidotransferase subunit B (477 aa).

This sequence belongs to the GatB/GatE family. GatB subfamily. As to quaternary structure, heterotrimer of A, B and C subunits.

The enzyme catalyses L-glutamyl-tRNA(Gln) + L-glutamine + ATP + H2O = L-glutaminyl-tRNA(Gln) + L-glutamate + ADP + phosphate + H(+). It catalyses the reaction L-aspartyl-tRNA(Asn) + L-glutamine + ATP + H2O = L-asparaginyl-tRNA(Asn) + L-glutamate + ADP + phosphate + 2 H(+). Its function is as follows. Allows the formation of correctly charged Asn-tRNA(Asn) or Gln-tRNA(Gln) through the transamidation of misacylated Asp-tRNA(Asn) or Glu-tRNA(Gln) in organisms which lack either or both of asparaginyl-tRNA or glutaminyl-tRNA synthetases. The reaction takes place in the presence of glutamine and ATP through an activated phospho-Asp-tRNA(Asn) or phospho-Glu-tRNA(Gln). The polypeptide is Aspartyl/glutamyl-tRNA(Asn/Gln) amidotransferase subunit B (Thioalkalivibrio sulfidiphilus (strain HL-EbGR7)).